Reading from the N-terminus, the 143-residue chain is uncharacterized protein (143 aa).

The disordered stretch occupies residues 1–37 (MSAPASSSAIAPSQPTAPGHARHSASWSASASDPSGA).

This sequence belongs to the dynein light chain Tctex-type family.

This is an uncharacterized protein from Mycosarcoma maydis (Corn smut fungus).